The following is a 157-amino-acid chain: GDP-mannose mannosyl hydrolase (157 aa).

Substrate contacts are provided by residues Phe-2 to Leu-3, Phe-8, and Arg-36. One can recognise a Nudix hydrolase domain in the interval Leu-3–Pro-153. Gly-49, Glu-69, and Gln-122 together coordinate Mg(2+). A Nudix box motif is present at residues Gly-50–Gly-71.

Belongs to the Nudix hydrolase family. As to quaternary structure, homodimer. It depends on Mg(2+) as a cofactor.

The catalysed reaction is GDP-alpha-D-mannose + H2O = D-mannose + GDP + H(+). Functionally, hydrolyzes GDP-mannose. The polypeptide is GDP-mannose mannosyl hydrolase (Salmonella typhi).